The chain runs to 138 residues: UPF0201 protein TK1335 (138 aa).

Belongs to the UPF0201 family.

The protein is UPF0201 protein TK1335 of Thermococcus kodakarensis (strain ATCC BAA-918 / JCM 12380 / KOD1) (Pyrococcus kodakaraensis (strain KOD1)).